Here is a 119-residue protein sequence, read N- to C-terminus: MIQKNTLLDVADNSGARKVLCIGLLNGKKSASVGDVIVVSTKVVIPRGKVSKGKVYKAVIVRVKKAVRRLDGSVIKFSSNAVVLINDQGDPLGTRVFGPVKKLPFGLFSKVMSLAVEVL.

It belongs to the universal ribosomal protein uL14 family. As to quaternary structure, part of the 50S ribosomal subunit. Forms a cluster with proteins L3 and L19. In the 70S ribosome, L14 and L19 interact and together make contacts with the 16S rRNA in bridges B5 and B8.

Functionally, binds to 23S rRNA. Forms part of two intersubunit bridges in the 70S ribosome. The chain is Large ribosomal subunit protein uL14 from Ehrlichia ruminantium (strain Gardel).